Here is a 343-residue protein sequence, read N- to C-terminus: S-adenosylmethionine:tRNA ribosyltransferase-isomerase (343 aa).

Belongs to the QueA family. Monomer.

The protein localises to the cytoplasm. It carries out the reaction 7-aminomethyl-7-carbaguanosine(34) in tRNA + S-adenosyl-L-methionine = epoxyqueuosine(34) in tRNA + adenine + L-methionine + 2 H(+). Its pathway is tRNA modification; tRNA-queuosine biosynthesis. In terms of biological role, transfers and isomerizes the ribose moiety from AdoMet to the 7-aminomethyl group of 7-deazaguanine (preQ1-tRNA) to give epoxyqueuosine (oQ-tRNA). In Geobacter metallireducens (strain ATCC 53774 / DSM 7210 / GS-15), this protein is S-adenosylmethionine:tRNA ribosyltransferase-isomerase.